The following is a 215-amino-acid chain: Putative zinc finger protein ORF121 (215 aa).

The RING-type; degenerate zinc-finger motif lies at 53–105 (CVICMEPTYTKKTLAECDIEGGALRVTTMPCPTHYICDNCIRQEMEDKCPICR).

The protein is Putative zinc finger protein ORF121 of Magallana gigas (Pacific oyster).